The primary structure comprises 37 residues: Lambda-hexatoxin-Hf1a (37 aa).

4 cysteine pairs are disulfide-bonded: C4-C18, C11-C23, C14-C15, and C17-C34.

The protein belongs to the neurotoxin 11 (kappa toxin) family. In terms of tissue distribution, expressed by the venom gland.

It localises to the secreted. In terms of biological role, this excitatory toxin inhibits insect calcium-activated potassium (KCa) channels (Slo-type). This Hadronyche formidabilis (Northern tree funnel-web spider) protein is Lambda-hexatoxin-Hf1a.